The sequence spans 763 residues: Xaa-Pro dipeptidyl-peptidase (763 aa).

Catalysis depends on charge relay system residues serine 348, aspartate 468, and histidine 498.

This sequence belongs to the peptidase S15 family. In terms of assembly, homodimer.

The protein localises to the cytoplasm. It catalyses the reaction Hydrolyzes Xaa-Pro-|- bonds to release unblocked, N-terminal dipeptides from substrates including Ala-Pro-|-p-nitroanilide and (sequentially) Tyr-Pro-|-Phe-Pro-|-Gly-Pro-|-Ile.. Removes N-terminal dipeptides sequentially from polypeptides having unsubstituted N-termini provided that the penultimate residue is proline. This chain is Xaa-Pro dipeptidyl-peptidase, found in Lactococcus lactis subsp. cremoris (strain SK11).